The primary structure comprises 265 residues: MSESKSSRQATLRYQMELFLLAVSFFSRLPVPSDLPYSEERMNQAGRYFALVGVILGVLCALVFYFTQLIFPDSVAIVLTMAFSLLLTGAFHEDGLTDMADGIGGGMTVERRLSIMKDSRIGTYGAATLVMALLAKFVLWSELVHLPDFWLVIVVAYTTSRALAATLIYDMPYVSDSDTSKSKPLASKQSSSEVAILLFTAGVASLFLGVIQTSFIVIVLFAFRFAFKRWLTKRIGGFTGDCLGAAQQLSELLVYLTLIAFYQNI.

A run of 4 helical transmembrane segments spans residues 51 to 71, 72 to 92, 121 to 140, and 203 to 223; these read LVGV…QLIF, PDSV…GAFH, IGTY…FVLW, and VASL…LFAF.

Belongs to the CobS family. Requires Mg(2+) as cofactor.

Its subcellular location is the cell inner membrane. It catalyses the reaction alpha-ribazole + adenosylcob(III)inamide-GDP = adenosylcob(III)alamin + GMP + H(+). The enzyme catalyses alpha-ribazole 5'-phosphate + adenosylcob(III)inamide-GDP = adenosylcob(III)alamin 5'-phosphate + GMP + H(+). Its pathway is cofactor biosynthesis; adenosylcobalamin biosynthesis; adenosylcobalamin from cob(II)yrinate a,c-diamide: step 7/7. Functionally, joins adenosylcobinamide-GDP and alpha-ribazole to generate adenosylcobalamin (Ado-cobalamin). Also synthesizes adenosylcobalamin 5'-phosphate from adenosylcobinamide-GDP and alpha-ribazole 5'-phosphate. In Vibrio parahaemolyticus serotype O3:K6 (strain RIMD 2210633), this protein is Adenosylcobinamide-GDP ribazoletransferase.